The sequence spans 134 residues: Antifungal protein ginkbilobin-2 (134 aa).

A signal peptide spans 1–26; it reads MKTMRMNSAFILAFALAAAMLILTEA. One can recognise a Gnk2-homologous domain in the interval 29-134; the sequence is TAFVSSACNT…CFIQYEQRSF (106 aa). Intrachain disulfides connect Cys36–Cys112, Cys88–Cys97, and Cys100–Cys125. Asn37 contacts alpha-D-mannopyranose. Positions 119 and 130 each coordinate alpha-D-mannopyranose.

As to quaternary structure, binds actin in vitro.

The protein resides in the secreted. Possesses antifungal activity against F.oxysporum, T.reesei and C.albicans. Weakly inhibits the aspartic acid protease pepsin activity. Exerts antifungal activity against S.cerevisiae and F.culmorum through its carbohydrate-binding specificity. Acts as a lectin that stricly recognizes alpha-1,2-linked mannose moieties and interacts with the yeast cell wall mannan polysaccharide. Can interfere with the fungal actin remodeling resulting to the activation of an actin-dependent cell death. This is Antifungal protein ginkbilobin-2 from Ginkgo biloba (Ginkgo).